Reading from the N-terminus, the 66-residue chain is Large ribosomal subunit protein bL33c (66 aa).

This sequence belongs to the bacterial ribosomal protein bL33 family.

Its subcellular location is the plastid. The protein localises to the chloroplast. The protein is Large ribosomal subunit protein bL33c of Calycanthus floridus var. glaucus (Eastern sweetshrub).